Consider the following 393-residue polypeptide: Branched-chain amino acid aminotransferase 1, mitochondrial (393 aa).

The N-terminal 34 residues, 1–34 (MIHRGLWLHNLVQSYRVGSSSSSSTLFKLVYRYN), are a transit peptide targeting the mitochondrion. Position 138 (Arg-138) interacts with pyridoxal 5'-phosphate. The active-site Proton acceptor is Lys-240. At Lys-240 the chain carries N6-(pyridoxal phosphate)lysine. Residue Glu-276 coordinates pyridoxal 5'-phosphate.

The protein belongs to the class-IV pyridoxal-phosphate-dependent aminotransferase family. Pyridoxal 5'-phosphate serves as cofactor. As to expression, expressed specifically in lupulin glands.

The protein resides in the mitochondrion. It carries out the reaction L-isoleucine + 2-oxoglutarate = (S)-3-methyl-2-oxopentanoate + L-glutamate. The enzyme catalyses L-leucine + 2-oxoglutarate = 4-methyl-2-oxopentanoate + L-glutamate. It catalyses the reaction L-valine + 2-oxoglutarate = 3-methyl-2-oxobutanoate + L-glutamate. Its pathway is amino-acid biosynthesis; L-isoleucine biosynthesis; L-isoleucine from 2-oxobutanoate: step 4/4. It functions in the pathway amino-acid biosynthesis; L-leucine biosynthesis; L-leucine from 3-methyl-2-oxobutanoate: step 4/4. It participates in amino-acid biosynthesis; L-valine biosynthesis; L-valine from pyruvate: step 4/4. Functionally, converts 2-oxo acids to branched-chain amino acids (BCAA). Shows no kinetic preferences corresponding to anabolic or catabolic functions, but likely involved in BCAA catabolism. The protein is Branched-chain amino acid aminotransferase 1, mitochondrial of Humulus lupulus (European hop).